The primary structure comprises 310 residues: Nucleotide-binding protein Mmc1_3333 (310 aa).

Gly19–Ser26 lines the ATP pocket.

Belongs to the RapZ-like family.

Its function is as follows. Displays ATPase and GTPase activities. The protein is Nucleotide-binding protein Mmc1_3333 of Magnetococcus marinus (strain ATCC BAA-1437 / JCM 17883 / MC-1).